We begin with the raw amino-acid sequence, 150 residues long: Peptidoglycan-associated lipoprotein (150 aa).

The N-terminal stretch at methionine 1–alanine 19 is a signal peptide. Cysteine 20 is lipidated: N-palmitoyl cysteine. Residue cysteine 20 is the site of S-diacylglycerol cysteine attachment. The region spanning serine 37 to tyrosine 150 is the OmpA-like domain.

Belongs to the Pal lipoprotein family. As to quaternary structure, the Tol-Pal system is composed of five core proteins: the inner membrane proteins TolA, TolQ and TolR, the periplasmic protein TolB and the outer membrane protein Pal. They form a network linking the inner and outer membranes and the peptidoglycan layer.

It localises to the cell outer membrane. In terms of biological role, part of the Tol-Pal system, which plays a role in outer membrane invagination during cell division and is important for maintaining outer membrane integrity. In Pasteurella multocida (strain Pm70), this protein is Peptidoglycan-associated lipoprotein.